The following is an 84-amino-acid chain: Large ribosomal subunit protein bL27 (84 aa).

The protein belongs to the bacterial ribosomal protein bL27 family.

The sequence is that of Large ribosomal subunit protein bL27 from Campylobacter lari (strain RM2100 / D67 / ATCC BAA-1060).